A 294-amino-acid chain; its full sequence is DEP domain-containing protein 4 (294 aa).

The 92-residue stretch at 71–162 (LQAQVEIKRR…SNISLYRFLG (92 aa)) folds into the DEP domain.

The protein is DEP domain-containing protein 4 (DEPDC4) of Homo sapiens (Human).